Consider the following 709-residue polypeptide: Polyribonucleotide nucleotidyltransferase (709 aa).

Residues aspartate 485 and aspartate 491 each coordinate Mg(2+). The region spanning 552-611 (PRIHTMKIDPKKIKDVIGKGGATIRALTEETGTSIDIDDDGTVKIAATDNNAAKRVMERI) is the KH domain. Positions 621–689 (NAIYKGKVTR…RQGRIRLTMK (69 aa)) constitute an S1 motif domain.

Belongs to the polyribonucleotide nucleotidyltransferase family. In terms of assembly, component of the RNA degradosome, which is a multiprotein complex involved in RNA processing and mRNA degradation. Mg(2+) is required as a cofactor.

The protein localises to the cytoplasm. The enzyme catalyses RNA(n+1) + phosphate = RNA(n) + a ribonucleoside 5'-diphosphate. In terms of biological role, involved in mRNA degradation. Catalyzes the phosphorolysis of single-stranded polyribonucleotides processively in the 3'- to 5'-direction. In Glaesserella parasuis serovar 5 (strain SH0165) (Haemophilus parasuis), this protein is Polyribonucleotide nucleotidyltransferase.